A 449-amino-acid chain; its full sequence is Tripartite motif-containing protein 64B (449 aa).

Residues 15–56 form an RING-type zinc finger; the sequence is CCICVNYFIDPVTIDCGHSFCRPCLCLCSEEGRAPMRCPSCR. A B box-type zinc finger spans residues 87–128; it reads SSDNICVLHEETKELFCEADKRLLCGPCSESPEHMAHSHSPI. Zn(2+)-binding residues include cysteine 92, histidine 95, cysteine 114, and histidine 120. Positions 189–225 form a coiled coil; it reads LDEEEQRHLQALEREAEELFQQLQDSQVRMTQHLERM. The region spanning 268 to 449 is the B30.2/SPRY domain; sequence ELTSWCITGV…LRPFFCFGCT (182 aa).

Belongs to the TRIM/RBCC family.

In Homo sapiens (Human), this protein is Tripartite motif-containing protein 64B (TRIM64B).